Consider the following 37-residue polypeptide: Cytochrome b6-f complex subunit 5 (37 aa).

The helical transmembrane segment at 5–25 (LLSGIVLGLIPITLAGLFVTA) threads the bilayer.

This sequence belongs to the PetG family. In terms of assembly, the 4 large subunits of the cytochrome b6-f complex are cytochrome b6, subunit IV (17 kDa polypeptide, PetD), cytochrome f and the Rieske protein, while the 4 small subunits are PetG, PetL, PetM and PetN. The complex functions as a dimer.

The protein resides in the plastid. It localises to the chloroplast thylakoid membrane. Component of the cytochrome b6-f complex, which mediates electron transfer between photosystem II (PSII) and photosystem I (PSI), cyclic electron flow around PSI, and state transitions. PetG is required for either the stability or assembly of the cytochrome b6-f complex. This Chara vulgaris (Common stonewort) protein is Cytochrome b6-f complex subunit 5.